Reading from the N-terminus, the 752-residue chain is MAP/microtubule affinity-regulating kinase 4 (752 aa).

Residues 1-36 (MSSRTVLAPGNDRNSDTHGTLGSGRSSDKGPSWSSR) form a disordered region. The 252-residue stretch at 59-310 (YRLLRTIGKG…LEQIMKDKWI (252 aa)) folds into the Protein kinase domain. ATP contacts are provided by residues 65 to 73 (IGKGNFAKV) and K88. D181 functions as the Proton acceptor in the catalytic mechanism. At T214 the chain carries Phosphothreonine; by LKB1. In terms of domain architecture, UBA spans 324-368 (EPEEDFGDTKRIEVMVGMGYTREEIKESLTSQKYNEVTATYLLLG). Positions 385–614 (ARVRAPSDTT…PAGRPRPTTN (230 aa)) are disordered. A compositionally biased stretch (low complexity) spans 391–406 (SDTTNGTSSSKGTSHS). A phosphoserine mark is found at S423 and S543. Low complexity predominate over residues 544–553 (PSSHSLAPPS). Residues 703–752 (AGGPEPLSHFEVEVCQLPRPGLRGVLFRRVAGTALAFRTLVTRISNDLEL) form the KA1 domain.

It belongs to the protein kinase superfamily. CAMK Ser/Thr protein kinase family. SNF1 subfamily. In terms of assembly, interacts with MAPT/TAU. Interacts with gamma-tubulin. Interacts with ODF2. Interacts with USP9X. Interacts with YWHAQ. Interacts with NLRP3; promoting NLRP3 recruitment to microtubule organizing center (MTOC). Mg(2+) serves as cofactor. In terms of processing, ubiquitinated with 'Lys-29'- and 'Lys-33'-linked polyubiquitins which appear to impede LKB1-mediated phosphorylation. Deubiquitinated by USP9X. Post-translationally, phosphorylated at Thr-214 by STK11/LKB1 in complex with STE20-related adapter-alpha (STRADA) pseudo kinase and CAB39. Phosphorylated throughout the cell cycle. As to expression, ubiquitous. Isoform 2 is brain-specific. Expressed at highest levels in brain and testis. Also expressed in heart, lung, liver, muscle, kidney and spleen.

It is found in the cytoplasm. The protein resides in the cytoskeleton. Its subcellular location is the microtubule organizing center. It localises to the centrosome. The protein localises to the cilium basal body. It is found in the cilium axoneme. The protein resides in the cell projection. Its subcellular location is the dendrite. The enzyme catalyses L-seryl-[protein] + ATP = O-phospho-L-seryl-[protein] + ADP + H(+). The catalysed reaction is L-threonyl-[protein] + ATP = O-phospho-L-threonyl-[protein] + ADP + H(+). With respect to regulation, activated by phosphorylation on Thr-214. Serine/threonine-protein kinase. Phosphorylates the microtubule-associated protein MAPT/TAU. Also phosphorylates the microtubule-associated proteins MAP2 and MAP4. Involved in regulation of the microtubule network, causing reorganization of microtubules into bundles. Required for the initiation of axoneme extension during cilium assembly. Regulates the centrosomal location of ODF2 and phosphorylates ODF2 in vitro. Plays a role in cell cycle progression, specifically in the G1/S checkpoint. Reduces neuronal cell survival. Plays a role in energy homeostasis by regulating satiety and metabolic rate. Promotes adipogenesis by activating JNK1 and inhibiting the p38MAPK pathway, and triggers apoptosis by activating the JNK1 pathway. Phosphorylates mTORC1 complex member RPTOR and acts as a negative regulator of the mTORC1 complex, probably due to disruption of the interaction between phosphorylated RPTOR and the RRAGA/RRAGC heterodimer which is required for mTORC1 activation. Involved in NLRP3 positioning along microtubules by mediating NLRP3 recruitment to microtubule organizing center (MTOC) upon inflammasome activation. This is MAP/microtubule affinity-regulating kinase 4 from Homo sapiens (Human).